A 362-amino-acid chain; its full sequence is Glutamate--cysteine ligase (362 aa).

This sequence belongs to the glutamate--cysteine ligase type 2 family. YbdK subfamily.

It carries out the reaction L-cysteine + L-glutamate + ATP = gamma-L-glutamyl-L-cysteine + ADP + phosphate + H(+). Catalyzes the synthesis of gamma-glutamylcysteine (gamma-GC), the main low-molecular-weight thiol compound instead of glutathione in halophilic archaea. The protein is Glutamate--cysteine ligase of Natronomonas pharaonis (strain ATCC 35678 / DSM 2160 / CIP 103997 / JCM 8858 / NBRC 14720 / NCIMB 2260 / Gabara) (Halobacterium pharaonis).